The chain runs to 715 residues: ATP-dependent DNA helicase Hel308 (715 aa).

The Q motif motif lies at 8–36 (MPIEDLKLPSNVIEIIKKRGIKKLNPPQT). ATP contacts are provided by residues Gln35 and 53-60 (SPTGSGKT). Residues 40 to 203 (KKGLLEGNRL…WLGAEPVATN (164 aa)) form the Helicase ATP-binding domain. A DEAH box motif is present at residues 152–155 (DELH). A Helicase C-terminal domain is found at 236–442 (HGDDAIIAYT…ERAFYTFLLG (207 aa)).

The protein belongs to the helicase family. Hel308 subfamily. In terms of assembly, monomer.

The enzyme catalyses Couples ATP hydrolysis with the unwinding of duplex DNA by translocating in the 3'-5' direction.. It catalyses the reaction ATP + H2O = ADP + phosphate + H(+). In terms of biological role, DNA-dependent ATPase and 3'-5' DNA helicase that may be involved in repair of stalled replication forks. A low processivity 3'-5' helicase. Unwinds short dsDNA substrates with 3'-overhangs (25 bp dsDNA with 25 base overhang), less active on longer dsDNA substrates. Also unwinds the lagging strand of a stalled replication fork (but the leading strand was not tested). Binds ssDNA, but dsDNA about 35-fold less well. Able to displace streptavidin from biotinylated ssDNA, which is partially inhibited by DNA-binding proteins, suggesting it may play a role in stripping proteins from stalled replication forks. The protein is ATP-dependent DNA helicase Hel308 of Saccharolobus solfataricus (strain 98/2) (Sulfolobus solfataricus).